Reading from the N-terminus, the 741-residue chain is Zinc finger and BTB domain-containing protein 20 (741 aa).

Basic and acidic residues predominate over residues 1-17; sequence MLERKKPKTAENQKASE. Residues 1–32 are disordered; that stretch reads MLERKKPKTAENQKASEENEITQPGGSSAKPG. The region spanning 104–167 is the BTB domain; that stretch reads CDVTVRIHGS…MYSGVLRVSQ (64 aa). Residues 203–235 are disordered; it reads GIQDSGQDTPRGTPESGTSGQSSDTESGYLQSH. The span at 206-235 shows a compositional bias: polar residues; the sequence is DSGQDTPRGTPESGTSGQSSDTESGYLQSH. The residue at position 211 (Thr211) is a Phosphothreonine. Lys330 participates in a covalent cross-link: Glycyl lysine isopeptide (Lys-Gly) (interchain with G-Cter in SUMO1); alternate. Residue Lys330 forms a Glycyl lysine isopeptide (Lys-Gly) (interchain with G-Cter in SUMO2); alternate linkage. The tract at residues 350-440 is disordered; the sequence is RNESEECTED…SSPERSNEVE (91 aa). Ser353 is subject to Phosphoserine. Positions 354-367 are enriched in acidic residues; that stretch reads EECTEDTDQAEGTE. Residue Thr357 is modified to Phosphothreonine. Residue Lys371 forms a Glycyl lysine isopeptide (Lys-Gly) (interchain with G-Cter in SUMO2) linkage. Positions 404-423 are enriched in low complexity; the sequence is AEPTQPEQAAEAPAEGGPQT. The segment covering 424-434 has biased composition (polar residues); sequence NQLETGASSPE. 4 consecutive C2H2-type zinc fingers follow at residues 578 to 600, 606 to 628, 634 to 656, and 662 to 684; these read YECTLCNKTFTAKQNYVKHMFVH, HQCSICWRSFSLKDYLIKHMVTH, YQCSICNKRFTQKSSLNVHMRLH, and YECYICKKKFSHKTLLERHVALH. Phosphothreonine is present on residues Thr690 and Thr695. A C2H2-type 5 zinc finger spans residues 715 to 737; that stretch reads YVCSVCPAKFDQIEQFNDHMRMH. Residue Lys723 forms a Glycyl lysine isopeptide (Lys-Gly) (interchain with G-Cter in SUMO2) linkage.

In terms of assembly, can homodimerize. Binds to DNA. Post-translationally, sumoylated with SUMO1. Expressed in spleen, lymph node, thymus, peripheral blood leukocytes, and fetal liver.

It localises to the nucleus. Functionally, may be a transcription factor that may be involved in hematopoiesis, oncogenesis, and immune responses. Plays a role in postnatal myogenesis, may be involved in the regulation of satellite cells self-renewal. This chain is Zinc finger and BTB domain-containing protein 20 (ZBTB20), found in Homo sapiens (Human).